The sequence spans 124 residues: KETAAAKFERQHMDSSTSAASSSNYCNQMMKSRNLTKDRCKPVNTFVHESLADVQAVCSQKNVACKNGQTNCYQSYSTMSITDCRETGSSKYPNCAYKTTQANKHIIVACEGNPYVPVHFDASV.

Over residues 1-13 (KETAAAKFERQHM) the composition is skewed to basic and acidic residues. Positions 1-22 (KETAAAKFERQHMDSSTSAASS) are disordered. Substrate is bound by residues Lys7 and Arg10. The active-site Proton acceptor is the His12. 4 disulfides stabilise this stretch: Cys26-Cys84, Cys40-Cys95, Cys58-Cys110, and Cys65-Cys72. N-linked (GlcNAc...) asparagine glycosylation is present at Asn34. Residues 41–45 (KPVNT), Lys66, and Arg85 each bind substrate. The active-site Proton donor is His119.

The protein belongs to the pancreatic ribonuclease family. In terms of assembly, monomer. Interacts with and forms tight 1:1 complexes with RNH1. Dimerization of two such complexes may occur. Interaction with RNH1 inhibits this protein. Pancreas.

It is found in the secreted. It carries out the reaction an [RNA] containing cytidine + H2O = an [RNA]-3'-cytidine-3'-phosphate + a 5'-hydroxy-ribonucleotide-3'-[RNA].. The enzyme catalyses an [RNA] containing uridine + H2O = an [RNA]-3'-uridine-3'-phosphate + a 5'-hydroxy-ribonucleotide-3'-[RNA].. Functionally, endonuclease that catalyzes the cleavage of RNA on the 3' side of pyrimidine nucleotides. Acts on single-stranded and double-stranded RNA. The polypeptide is Ribonuclease pancreatic (RNASE1) (Bison bison (American bison)).